The following is a 138-amino-acid chain: Aspartate 1-decarboxylase (138 aa).

Serine 25 (schiff-base intermediate with substrate; via pyruvic acid) is an active-site residue. Position 25 is a pyruvic acid (Ser) (serine 25). Residue threonine 57 coordinates substrate. Tyrosine 58 (proton donor) is an active-site residue. 73-75 (GAA) serves as a coordination point for substrate. The segment at 116–138 (ELGGDPAQVPDGSGLKNPRHPEA) is disordered.

It belongs to the PanD family. Heterooctamer of four alpha and four beta subunits. The cofactor is pyruvate. Post-translationally, is synthesized initially as an inactive proenzyme, which is activated by self-cleavage at a specific serine bond to produce a beta-subunit with a hydroxyl group at its C-terminus and an alpha-subunit with a pyruvoyl group at its N-terminus.

The protein localises to the cytoplasm. The catalysed reaction is L-aspartate + H(+) = beta-alanine + CO2. It participates in cofactor biosynthesis; (R)-pantothenate biosynthesis; beta-alanine from L-aspartate: step 1/1. Catalyzes the pyruvoyl-dependent decarboxylation of aspartate to produce beta-alanine. This chain is Aspartate 1-decarboxylase, found in Corynebacterium jeikeium (strain K411).